A 110-amino-acid chain; its full sequence is UPF0132 membrane protein MJ1443 (110 aa).

Helical transmembrane passes span 15 to 35 (IEGALCYLFGVITGILFYILE), 49 to 69 (IILFGGLWVLSIILAFIPYGW), and 70 to 90 (MLSGLVNLAAFILWIVCMYKA).

Belongs to the UPF0132 family.

It localises to the cell membrane. This Methanocaldococcus jannaschii (strain ATCC 43067 / DSM 2661 / JAL-1 / JCM 10045 / NBRC 100440) (Methanococcus jannaschii) protein is UPF0132 membrane protein MJ1443.